Reading from the N-terminus, the 471-residue chain is uncharacterized protein (471 aa).

4 consecutive transmembrane segments (helical) span residues 10 to 30 (ALWLLDFLTFNISFLLSLFVI), 46 to 66 (IDDRTYIHAVLAGICVGWFAI), 87 to 107 (TLIIFAIFELAIVAFPKLYFS), and 280 to 300 (IVVGSLAIIIFSPVLLYLYFA).

It belongs to the bacterial sugar transferase family.

It is found in the cell membrane. The protein operates within glycan metabolism; exopolysaccharide biosynthesis. Its function is as follows. May function as a sugar transferase. This is an uncharacterized protein from Haemophilus influenzae (strain ATCC 51907 / DSM 11121 / KW20 / Rd).